The primary structure comprises 304 residues: Calcium release-activated calcium channel protein 1 (304 aa).

The span at 1 to 11 (MHPEPAPPPSH) shows a compositional bias: pro residues. Positions 1–50 (MHPEPAPPPSHSNPELPVSGGSSTSGSRRSRRRSGDGEPSGAPPLPPPPP) are disordered. The Cytoplasmic portion of the chain corresponds to 1–89 (MHPEPAPPPS…KLYLSRAKLK (89 aa)). The required for generation of inwardly rectifying CRAC currents stretch occupies residues 3–49 (PEPAPPPSHSNPELPVSGGSSTSGSRRSRRRSGDGEPSGAPPLPPPP). A compositionally biased stretch (low complexity) spans 12–27 (SNPELPVSGGSSTSGS). The segment at 39–61 (PSGAPPLPPPPPAVSYPDWIGQS) is AKAP5 association region. Residues 41 to 50 (GAPPLPPPPP) show a composition bias toward pro residues. The tract at residues 72–92 (SMQALSWRKLYLSRAKLKASS) is interaction with STIM1. Residues 90–107 (ASSRTSALLSGFAMVAMV) traverse the membrane as a helical segment. At 108–121 (EVQLDTDHDYPPGL) the chain is on the extracellular side. A helical membrane pass occupies residues 122-142 (LIVFSACTTVLVAVHLFALMI). Residues 143–175 (STCILPNIEAVSNVHNLNSVKESPHERMHRHIE) are Cytoplasmic-facing. A helical transmembrane segment spans residues 176–196 (LAWAFSTVIGTLLFLAEVVLL). Over 197–237 (CWVKFLPLKRQAGQPSPTKPPAESVIVANHSDSSGITPGEA) the chain is Extracellular. Asparagine 225 carries an N-linked (GlcNAc...) asparagine glycan. A helical membrane pass occupies residues 238–258 (AAIASTAIMVPCGLVFIVFAV). Over 259–304 (HFYRSLVSHKTDRQFQELNELAEFARLQDQLDHRGDHSLTPGTHYA) the chain is Cytoplasmic. Residues 275-295 (ELNELAEFARLQDQLDHRGDH) are interaction with STIM1. Residue threonine 298 is modified to Phosphothreonine.

The protein belongs to the Orai family. As to quaternary structure, oligomerizes in homomeric and heteromeric ORAI complexes. Native CRAC channels most likely consist of hexameric ORAI heteromers, implying that diverse ORAI1, ORAI2 and ORAI3 subunit combinations with distinct biophysical properties can operate in a cell-type specific way. ARC channels are heteropentamers consisting of three ORAI1 and two ORAI3 subunits. Interacts with STIM1 and STIM2; this regulates channel activity. Interacts with CALM; this may displace STIM1 and STIM2 and might thereby modulate channel activity. Interacts (via N-terminus) with AKAP5 upon store depletion. Interacts with CRACR2A/EFCAB4B; the interaction is direct and takes place in absence of Ca(2+). Forms a complex with CRACR2A/EFCAB4B and STIM1 at low concentration of Ca(2+), the complex dissociates at elevated Ca(2+) concentrations. Interacts with ASPH (isoform 8). Interacts with SLC35G1. Interacts with UBQLN1. Interacts with ADCY8; interaction is calcium store depletion independent; interaction occurs in membrane raft; interaction increases markedly after store depletion; positively regulates SOCE-induced adenylate cyclase activity; contributes to the targeting of ADCY8 to discrete regions of the plasma membrane that are shielded from other calcium events. Interacts with EFHB; the interaction takes place upon Ca(2+)-store depletion. Interacts (via N- and C-termini) with ATP2C2 (via N-terminus); this interaction regulates Ca(2+) influx at the plasma membrane. Interacts with TSPAN18; this interaction regulates ORAI1 exit from the endoplasmic (ER), and/or Golgi, and trafficking to the cell surface. In terms of processing, N-glycosylated. N-glycosylation inhibits channel activity in T cells. Ubiquitinated. Post-translationally, cys-195 is oxidated, leading to inactivation of channel activity. In terms of tissue distribution, expressed in lactating mammary epithelium (at protein level).

The protein localises to the cell membrane. Its subcellular location is the basolateral cell membrane. The enzyme catalyses Ca(2+)(in) = Ca(2+)(out). With respect to regulation, oxidation at Cys-197 leads to inactivation of channel activity. Pore-forming subunit of two major inward rectifying Ca(2+) channels at the plasma membrane: Ca(2+) release-activated Ca(2+) (CRAC) channels and arachidonate-regulated Ca(2+)-selective (ARC) channels. Assembles with ORAI2 and ORAI3 to form hexameric CRAC channels that mediate Ca(2+) influx upon depletion of endoplasmic reticulum Ca(2+) store and channel activation by Ca(2+) sensor STIM1, a process known as store-operated Ca(2+) entry (SOCE). Various pore subunit combinations may account for distinct CRAC channel spatiotemporal and cell-type specific dynamics. ORAI1 mainly contributes to the generation of Ca(2+) plateaus involved in sustained Ca(2+) entry and is dispensable for cytosolic Ca(2+) oscillations, whereas ORAI2 and ORAI3 generate oscillatory patterns. CRAC channels assemble in Ca(2+) signaling microdomains where Ca(2+) influx is coupled to calmodulin and calcineurin signaling and activation of NFAT transcription factors recruited to ORAI1 via AKAP5. Activates NFATC2/NFAT1 and NFATC3/NFAT4-mediated transcriptional responses. CRAC channels are the main pathway for Ca(2+) influx in T cells and promote the immune response to pathogens by activating NFAT-dependent cytokine and chemokine transcription. Assembles with ORAI3 to form channels that mediate store-independent Ca(2+) influx in response to inflammatory metabolites arachidonate or its derivative leukotriene C4, termed ARC and LRC channels respectively. Plays a prominent role in Ca(2+) influx at the basolateral membrane of mammary epithelial cells independently of the Ca(2+) content of endoplasmic reticulum or Golgi stores. May mediate transepithelial transport of large quantities of Ca(2+) for milk secretion. This Mus musculus (Mouse) protein is Calcium release-activated calcium channel protein 1 (Orai1).